The following is a 46-amino-acid chain: MVIIKYTTKTQPTPVKEMFISPQHYAKWRSHMGSKLTSVKPIKGGR.

The sequence is that of Putative gene 54 protein (54) from Bacillus phage SP01 (Bacteriophage SP01).